A 162-amino-acid polypeptide reads, in one-letter code: Ribosome-binding factor A (162 aa).

The disordered stretch occupies residues 124–162 (ARVRSGAKPAGEADPYRESGSGVEPGRDGSIGDDDQPEY).

This sequence belongs to the RbfA family. Monomer. Binds 30S ribosomal subunits, but not 50S ribosomal subunits or 70S ribosomes.

Its subcellular location is the cytoplasm. One of several proteins that assist in the late maturation steps of the functional core of the 30S ribosomal subunit. Associates with free 30S ribosomal subunits (but not with 30S subunits that are part of 70S ribosomes or polysomes). Required for efficient processing of 16S rRNA. May interact with the 5'-terminal helix region of 16S rRNA. The chain is Ribosome-binding factor A from Mycolicibacterium paratuberculosis (strain ATCC BAA-968 / K-10) (Mycobacterium paratuberculosis).